Reading from the N-terminus, the 293-residue chain is Phosphate import ATP-binding protein PstB (293 aa).

Positions 46–288 (MTCRKVDVHY…PGHQLTEDYI (243 aa)) constitute an ABC transporter domain. ATP is bound at residue 78-85 (GPSGCGKS).

Belongs to the ABC transporter superfamily. Phosphate importer (TC 3.A.1.7) family. In terms of assembly, the complex is composed of two ATP-binding proteins (PstB), two transmembrane proteins (PstC and PstA) and a solute-binding protein (PstS).

The protein resides in the cell inner membrane. It catalyses the reaction phosphate(out) + ATP + H2O = ADP + 2 phosphate(in) + H(+). Functionally, part of the ABC transporter complex PstSACB involved in phosphate import. Responsible for energy coupling to the transport system. The polypeptide is Phosphate import ATP-binding protein PstB (Desulfotalea psychrophila (strain LSv54 / DSM 12343)).